Consider the following 349-residue polypeptide: Magnesium-protoporphyrin IX monomethyl ester [oxidative] cyclase (349 aa).

Residues 1–10 (MTATTATAPA) show a composition bias toward low complexity. A disordered region spans residues 1–23 (MTATTATAPAMRGGGRNELPPHL).

It belongs to the AcsF family. The cofactor is Fe cation.

The enzyme catalyses Mg-protoporphyrin IX 13-monomethyl ester + 3 NADPH + 3 O2 + 2 H(+) = 3,8-divinyl protochlorophyllide a + 3 NADP(+) + 5 H2O. It functions in the pathway porphyrin-containing compound metabolism; chlorophyll biosynthesis (light-independent). Its function is as follows. Catalyzes the formation of the isocyclic ring in chlorophyll biosynthesis. Mediates the cyclase reaction, which results in the formation of divinylprotochlorophyllide (Pchlide) characteristic of all chlorophylls from magnesium-protoporphyrin IX 13-monomethyl ester (MgPMME). This Prochlorococcus marinus (strain MIT 9303) protein is Magnesium-protoporphyrin IX monomethyl ester [oxidative] cyclase.